The sequence spans 349 residues: Protein-glutamate methylesterase/protein-glutamine glutaminase (349 aa).

In terms of domain architecture, Response regulatory spans 5–122 (RVLSVDDSAL…REGMLAYSEM (118 aa)). Asp-56 is subject to 4-aspartylphosphate. Residues 152–344 (LLSSEKLIAI…QQMLAKISAG (193 aa)) enclose the CheB-type methylesterase domain. Residues Ser-164, His-190, and Asp-286 contribute to the active site.

It belongs to the CheB family. In terms of processing, phosphorylated by CheA. Phosphorylation of the N-terminal regulatory domain activates the methylesterase activity.

It localises to the cytoplasm. It carries out the reaction [protein]-L-glutamate 5-O-methyl ester + H2O = L-glutamyl-[protein] + methanol + H(+). The catalysed reaction is L-glutaminyl-[protein] + H2O = L-glutamyl-[protein] + NH4(+). Its function is as follows. Involved in chemotaxis. Part of a chemotaxis signal transduction system that modulates chemotaxis in response to various stimuli. Catalyzes the demethylation of specific methylglutamate residues introduced into the chemoreceptors (methyl-accepting chemotaxis proteins or MCP) by CheR. Also mediates the irreversible deamidation of specific glutamine residues to glutamic acid. This Salmonella typhi protein is Protein-glutamate methylesterase/protein-glutamine glutaminase.